Here is a 100-residue protein sequence, read N- to C-terminus: Small ribosomal subunit protein uS14c (100 aa).

This sequence belongs to the universal ribosomal protein uS14 family. In terms of assembly, component of the chloroplast small ribosomal subunit (SSU). Mature 70S chloroplast ribosomes of higher plants consist of a small (30S) and a large (50S) subunit. The 30S small subunit contains 1 molecule of ribosomal RNA (16S rRNA) and 24 different proteins. The 50S large subunit contains 3 rRNA molecules (23S, 5S and 4.5S rRNA) and 33 different proteins.

The protein resides in the plastid. It is found in the chloroplast. Its function is as follows. Component of the chloroplast ribosome (chloro-ribosome), a dedicated translation machinery responsible for the synthesis of chloroplast genome-encoded proteins, including proteins of the transcription and translation machinery and components of the photosynthetic apparatus. In Spinacia oleracea (Spinach), this protein is Small ribosomal subunit protein uS14c.